Consider the following 77-residue polypeptide: Acyl carrier protein homolog (77 aa).

The region spanning 1-76 is the Carrier domain; sequence MSINIKDLIM…DLINAFEDVL (76 aa). O-(pantetheine 4'-phosphoryl)serine is present on S36.

4'-phosphopantetheine is transferred from CoA to a specific serine of the apo-ACP-like protein.

It functions in the pathway lipid metabolism; fatty acid biosynthesis. In terms of biological role, carrier of the growing fatty acid chain in fatty acid biosynthesis. The protein is Acyl carrier protein homolog of Ureaplasma parvum serovar 3 (strain ATCC 700970).